The following is a 227-amino-acid chain: Esterase OVCA2 (227 aa).

Residues serine 119, aspartate 179, and histidine 206 each act as charge relay system in the active site.

Belongs to the LovG family.

The catalysed reaction is a carboxylic ester + H2O = an alcohol + a carboxylate + H(+). Its function is as follows. Exhibits ester hydrolase activity with a strong preference for long-chain alkyl ester substrates and high selectivity against a variety of short, branched, and substituted esters. Is able to hydrolyze ester bonds within a wide range of p-nitrophenyl derivatives (C2-C14) in vitro, with a strong preference toward substrates of &gt;8 carbons. The chain is Esterase OVCA2 (OVCA2) from Bos taurus (Bovine).